Here is a 147-residue protein sequence, read N- to C-terminus: Large ribosomal subunit protein uL15 (147 aa).

Over residues 1–14 the composition is skewed to basic and acidic residues; that stretch reads MKLHELRPAEGAVR. The disordered stretch occupies residues 1–54; it reads MKLHELRPAEGAVRDRKRKGRGTASGLGKTAGRGSNGQKARSGGGVRPGFEGGQ. Composition is skewed to gly residues over residues 23–35 and 42–52; these read TASG…GRGS and SGGGVRPGFEG.

The protein belongs to the universal ribosomal protein uL15 family. Part of the 50S ribosomal subunit.

In terms of biological role, binds to the 23S rRNA. In Alkaliphilus oremlandii (strain OhILAs) (Clostridium oremlandii (strain OhILAs)), this protein is Large ribosomal subunit protein uL15.